Reading from the N-terminus, the 367-residue chain is B2 bradykinin receptor (367 aa).

The Extracellular segment spans residues 1–36 (MLNLTSQVPEPALNGTLPQSSSCFHSDWWNWLNTIQ). N-linked (GlcNAc...) asparagine glycosylation is found at N3 and N14. A helical membrane pass occupies residues 37 to 60 (APFLWVLFLLAALENIFVLSVFCL). Residues 61-69 (HKNSCTVAE) lie on the Cytoplasmic side of the membrane. A helical membrane pass occupies residues 70-94 (IYLGNLAMADLILALGLPFWAITIA). Residues 95–107 (NHFDWLFGEVLCR) are Extracellular-facing. Residues C106 and C187 are joined by a disulfide bond. A helical membrane pass occupies residues 108–129 (VVNTMIYMNLYSSICFLMLVSI). The Cytoplasmic segment spans residues 130–151 (DRYLALVKTMSMGRMRGVRWAK). Residue Y132 is modified to Phosphotyrosine. Residues 152-174 (LYSLVIWGCTLLLSSPMLAFRTM) form a helical membrane-spanning segment. The Extracellular portion of the chain corresponds to 175-197 (HEYAAEGHNVTACIIKYPSRSWM). Residue N183 is glycosylated (N-linked (GlcNAc...) asparagine). Residues 198–224 (VFTNILLNSVGFLLPLSIITYCTVQIL) form a helical membrane-spanning segment. The Cytoplasmic portion of the chain corresponds to 225–243 (QVLRNNEMQKFKEIQTERK). Residues 244–268 (ATVLVLAVLLLFVVCWLPFQISTFL) traverse the membrane as a helical segment. At 269–287 (DTLLRLGVLSGCWDEHAVD) the chain is on the extracellular side. Residues 288–311 (VITQISSYVAYSNSGLNPLVYVIV) form a helical membrane-spanning segment. Residues 312–367 (GKRFRKKSREVYRVLCQKGGCMGEPVQMENSMGTLRTSISVERQIHKLQDWAGKKQ) lie on the Cytoplasmic side of the membrane. Y323 carries the phosphotyrosine modification. C327 is lipidated: S-palmitoyl cysteine. Position 342 is a phosphoserine (S342). T345 is subject to Phosphothreonine. A phosphoserine; by GRK6 mark is found at S349 and S351.

It belongs to the G-protein coupled receptor 1 family. Bradykinin receptor subfamily. BDKRB2 sub-subfamily. As to quaternary structure, forms a complex with PECAM1 and GNAQ. Interacts with PECAM1.

The protein resides in the cell membrane. Receptor for bradykinin. It is associated with G proteins that activate a phosphatidylinositol-calcium second messenger system. This is B2 bradykinin receptor (BDKRB2) from Sus scrofa (Pig).